The primary structure comprises 293 residues: Phosphatidylserine decarboxylase proenzyme (293 aa).

Active-site charge relay system; for autoendoproteolytic cleavage activity residues include Asp90, His147, and Ser254. Ser254 acts as the Schiff-base intermediate with substrate; via pyruvic acid; for decarboxylase activity in catalysis. At Ser254 the chain carries Pyruvic acid (Ser); by autocatalysis.

It belongs to the phosphatidylserine decarboxylase family. PSD-B subfamily. Prokaryotic type I sub-subfamily. In terms of assembly, heterodimer of a large membrane-associated beta subunit and a small pyruvoyl-containing alpha subunit. Requires pyruvate as cofactor. Is synthesized initially as an inactive proenzyme. Formation of the active enzyme involves a self-maturation process in which the active site pyruvoyl group is generated from an internal serine residue via an autocatalytic post-translational modification. Two non-identical subunits are generated from the proenzyme in this reaction, and the pyruvate is formed at the N-terminus of the alpha chain, which is derived from the carboxyl end of the proenzyme. The autoendoproteolytic cleavage occurs by a canonical serine protease mechanism, in which the side chain hydroxyl group of the serine supplies its oxygen atom to form the C-terminus of the beta chain, while the remainder of the serine residue undergoes an oxidative deamination to produce ammonia and the pyruvoyl prosthetic group on the alpha chain. During this reaction, the Ser that is part of the protease active site of the proenzyme becomes the pyruvoyl prosthetic group, which constitutes an essential element of the active site of the mature decarboxylase.

The protein resides in the cell membrane. The catalysed reaction is a 1,2-diacyl-sn-glycero-3-phospho-L-serine + H(+) = a 1,2-diacyl-sn-glycero-3-phosphoethanolamine + CO2. It functions in the pathway phospholipid metabolism; phosphatidylethanolamine biosynthesis; phosphatidylethanolamine from CDP-diacylglycerol: step 2/2. Its function is as follows. Catalyzes the formation of phosphatidylethanolamine (PtdEtn) from phosphatidylserine (PtdSer). The sequence is that of Phosphatidylserine decarboxylase proenzyme from Yersinia enterocolitica serotype O:8 / biotype 1B (strain NCTC 13174 / 8081).